The sequence spans 378 residues: Filamin-binding LIM protein 1 (378 aa).

Positions 1–69 are filamin-binding; sequence MASKPEKRVA…RSWMPPGRAA (69 aa). The segment at 38–179 is disordered; it reads WPGRPWESAP…PPPEEPVSFP (142 aa). Pro residues predominate over residues 103–115; the sequence is LPPPPPPPAADLP. LIM zinc-binding domains are found at residues 186 to 247, 248 to 305, and 306 to 375; these read DICA…TLEK, CGKC…RKFA, and PVCS…RSAA. The tract at residues 281 to 378 is PLEKHC1-binding; that stretch reads IGDESFALDS…HVKRSAAGCC (98 aa).

Interacts with PLEKHC1, FLNA, FLNB and FLNC. Interacts with NKX2-5.

It localises to the cell junction. Its subcellular location is the focal adhesion. It is found in the cytoplasm. The protein localises to the cytoskeleton. The protein resides in the stress fiber. Serves as an anchoring site for cell-ECM adhesion proteins and filamin-containing actin filaments. Is implicated in cell shape modulation (spreading) and motility. May participate in the regulation of filamin-mediated cross-linking and stabilization of actin filaments. May also regulate the assembly of filamin-containing signaling complexes that control actin assembly. Promotes dissociation of FLNA from ITGB3 and ITGB7. Promotes activation of integrins and regulates integrin-mediated cell-cell adhesion. This is Filamin-binding LIM protein 1 (FBLIM1) from Bos taurus (Bovine).